Consider the following 637-residue polypeptide: ATP-dependent RNA helicase DBP6 (637 aa).

A disordered region spans residues 1–93 (MFAVRFDPSQ…AASDHPDKHN (93 aa)). Over residues 33–84 (DEEDESSEEETESSEDEEEKEKEEVADEDSMDVDDESSGDDDEEAEEGEVDA) the composition is skewed to acidic residues. Residues 198-206 (TFPIQSILL) carry the Q motif motif. The region spanning 222–402 (KNFTRRVGDV…GLQFYNPKLF (181 aa)) is the Helicase ATP-binding domain. 235–242 (ASTGSGKT) contacts ATP. Positions 342 to 345 (DEAD) match the DEAD box motif. The region spanning 434–608 (FLLRLLSEIN…EGQEEEAQVL (175 aa)) is the Helicase C-terminal domain.

It belongs to the DEAD box helicase family. DDX51/DBP6 subfamily. Associated with pre-ribosomal particles.

Its subcellular location is the nucleus. The protein resides in the nucleolus. It carries out the reaction ATP + H2O = ADP + phosphate + H(+). ATP-binding RNA helicase involved in the biogenesis of 60S ribosomal subunits and is required for the normal formation of 25S and 5.8S rRNAs. The sequence is that of ATP-dependent RNA helicase DBP6 (DBP6) from Vanderwaltozyma polyspora (strain ATCC 22028 / DSM 70294 / BCRC 21397 / CBS 2163 / NBRC 10782 / NRRL Y-8283 / UCD 57-17) (Kluyveromyces polysporus).